A 443-amino-acid chain; its full sequence is Glutamyl-tRNA reductase (443 aa).

Substrate contacts are provided by residues 49 to 52, Ser109, 114 to 116, and Gln120; these read TCNR and ETQ. The active-site Nucleophile is Cys50. 189–194 contributes to the NADP(+) binding site; sequence GAGEMS.

This sequence belongs to the glutamyl-tRNA reductase family. In terms of assembly, homodimer.

The catalysed reaction is (S)-4-amino-5-oxopentanoate + tRNA(Glu) + NADP(+) = L-glutamyl-tRNA(Glu) + NADPH + H(+). The protein operates within porphyrin-containing compound metabolism; protoporphyrin-IX biosynthesis; 5-aminolevulinate from L-glutamyl-tRNA(Glu): step 1/2. Its function is as follows. Catalyzes the NADPH-dependent reduction of glutamyl-tRNA(Glu) to glutamate 1-semialdehyde (GSA). This is Glutamyl-tRNA reductase from Desulfitobacterium hafniense (strain DSM 10664 / DCB-2).